The chain runs to 529 residues: MLSLVGRVASASASGALRGLSPSAALPQAQLLLRAAPAGVHPARDYAAQASAAPKAGTATGRIVAVIGAVVDVQFDEGLPPILNALEVQGRDSRLVLEVAQHLGESTVRTIAMDGTEGLVRGQKVLDSGAPIKIPVGPETLGRIMNVIGEPIDERGPIKTKQFAPIHAEAPEFIEMSVEQEILVTGIKVVDLLAPYAKGGKIGLFGGAGVGKTVLIMELINNVAKAHGGYSVFAGVGERTREGNDLYHEMIESGVINLKDATSKVALVYGQMNEPPGARARVALTGLTVAEYFRDQEGQDVLLFIDNIFRFTQAGSEVSALLGRIPSAVGYQPTLATDMGTMQERITTTKKGSITSVQAIYVPADDLTDPAPATTFAHLDATTVLSRAIAELGIYPAVDPLDSTSRIMDPNIVGNEHYDVARGVQKILQDYKSLQDIIAILGMDELSEEDKLTVSRARKIQRFLSQPFQVAEVFTGHMGKLVPLKETIKGFQQILAGEYDHLPEQAFYMVGPIEEAVAKADKLAEEHGS.

A mitochondrion-targeting transit peptide spans 1 to 46 (MLSLVGRVASASASGALRGLSPSAALPQAQLLLRAAPAGVHPARDY). Ser-106 carries O-linked (GlcNAc) serine glycosylation. Lys-124, Lys-133, and Lys-161 each carry N6-acetyllysine; alternate. 3 positions are modified to N6-succinyllysine; alternate: Lys-124, Lys-133, and Lys-161. Lys-198 carries the post-translational modification N6-acetyllysine. Positions 209, 210, 211, 212, 213, and 214 each coordinate ADP. Gly-209 lines the ATP pocket. Phosphate-binding residues include Gly-209, Val-210, Gly-211, Lys-212, and Thr-213. 4 residues coordinate ATP: Gly-211, Lys-212, Thr-213, and Val-214. Thr-213 contacts Mg(2+). Glu-238 contacts Mg(2+). Residue Arg-239 participates in ATP binding. N6-acetyllysine; alternate is present on residues Lys-259 and Lys-264. Residues Lys-259 and Lys-264 each carry the N6-succinyllysine; alternate modification. Thr-312 carries the post-translational modification Phosphothreonine. N6-acetyllysine is present on Lys-426. Ser-433 is subject to Phosphoserine. An N6-acetyllysine mark is found at Lys-480 and Lys-485. N6-acetyllysine; alternate is present on Lys-522. At Lys-522 the chain carries N6-succinyllysine; alternate. Ser-529 carries the post-translational modification Phosphoserine.

The protein belongs to the ATPase alpha/beta chains family. In terms of assembly, homotrimer. Component of the ATP synthase complex composed at least of ATP5F1A/subunit alpha, ATP5F1B/subunit beta, ATP5MC1/subunit c (homooctomer), MT-ATP6/subunit a, MT-ATP8/subunit 8, ATP5ME/subunit e, ATP5MF/subunit f, ATP5MG/subunit g, ATP5MK/subunit k, ATP5MJ/subunit j, ATP5F1C/subunit gamma, ATP5F1D/subunit delta, ATP5F1E/subunit epsilon, ATP5PF/subunit F6, ATP5PB/subunit b, ATP5PD/subunit d, ATP5PO/subunit OSCP. ATP synthase complex consists of a soluble F(1) head domain (subunits alpha(3) and beta(3)) - the catalytic core - and a membrane F(0) domain - the membrane proton channel (subunits c, a, 8, e, f, g, k and j). These two domains are linked by a central stalk (subunits gamma, delta, and epsilon) rotating inside the F1 region and a stationary peripheral stalk (subunits F6, b, d, and OSCP). Interacts with PPIF. Interacts with BCL2L1 isoform BCL-X(L); the interaction mediates the association of BCL2L1 isoform BCL-X(L) with the mitochondrial membrane F(1)F(0) ATP synthase and enhances neurons metabolic efficiency. Interacts with CLN5 and PPT1. Interacts with S100A1; this interaction increases F1-ATPase activity. Interacts with MTLN. Interacts with TTC5/STRAP; the interaction results in decreased mitochondrial ATP production. Post-translationally, acetylation of Lys-133 is observed in liver mitochondria from fasted mice but not from fed mice.

It localises to the mitochondrion inner membrane. It catalyses the reaction ATP + H2O + 4 H(+)(in) = ADP + phosphate + 5 H(+)(out). Catalytic subunit beta, of the mitochondrial membrane ATP synthase complex (F(1)F(0) ATP synthase or Complex V) that produces ATP from ADP in the presence of a proton gradient across the membrane which is generated by electron transport complexes of the respiratory chain. ATP synthase complex consist of a soluble F(1) head domain - the catalytic core - and a membrane F(1) domain - the membrane proton channel. These two domains are linked by a central stalk rotating inside the F(1) region and a stationary peripheral stalk. During catalysis, ATP synthesis in the catalytic domain of F(1) is coupled via a rotary mechanism of the central stalk subunits to proton translocation. In vivo, can only synthesize ATP although its ATP hydrolase activity can be activated artificially in vitro. With the subunit alpha (ATP5F1A), forms the catalytic core in the F(1) domain. The chain is ATP synthase F(1) complex catalytic subunit beta, mitochondrial from Mus musculus (Mouse).